The chain runs to 301 residues: Indole-3-glycerol phosphate synthase (301 aa).

It belongs to the TrpC family.

The enzyme catalyses 1-(2-carboxyphenylamino)-1-deoxy-D-ribulose 5-phosphate + H(+) = (1S,2R)-1-C-(indol-3-yl)glycerol 3-phosphate + CO2 + H2O. The protein operates within amino-acid biosynthesis; L-tryptophan biosynthesis; L-tryptophan from chorismate: step 4/5. The chain is Indole-3-glycerol phosphate synthase from Prochlorococcus marinus (strain MIT 9313).